An 819-amino-acid chain; its full sequence is Leucine--tRNA ligase (819 aa).

The short motif at 41 to 51 (PYPSGTLHVGH) is the 'HIGH' region element. Residues 578–582 (KMSKS) carry the 'KMSKS' region motif. Residue K581 participates in ATP binding.

This sequence belongs to the class-I aminoacyl-tRNA synthetase family.

It localises to the cytoplasm. It catalyses the reaction tRNA(Leu) + L-leucine + ATP = L-leucyl-tRNA(Leu) + AMP + diphosphate. In Fervidobacterium nodosum (strain ATCC 35602 / DSM 5306 / Rt17-B1), this protein is Leucine--tRNA ligase.